Reading from the N-terminus, the 510-residue chain is Maturase K (510 aa).

The protein belongs to the intron maturase 2 family. MatK subfamily.

It is found in the plastid. Functionally, usually encoded in the trnK tRNA gene intron. Probably assists in splicing its own and other chloroplast group II introns. The chain is Maturase K from Bartsia alpina (Velvet bells).